The chain runs to 389 residues: MAFTGDELARMLQFKDKMISSAGLALKFEKVVQEAMASGIVLQHITCIKVRICDNSDILSDRQLRSLLINGLYPFEGRMSMFGVTEEWEGASAAPERQVVFLLSSTGQVLGYEDGVVFYLSPTFSDFWTTAMEFSCQNAILSNFIAQKSRDEYIDQFQKYFTRMRHTPIFLTGVLPRRFQKVESSACVEEDARASMRPIQCDSFGVKDTFCRPTEELLQPSANKDVGGKVCMSLSCREDNSARHCTIYGLTETRGIKIMFSRHTQTDRSEVMCNAATQTGDVVDNSSETLFLGKNLVHQSILETEVKTTAKNTFDVSNPRIDSVYDTTVFGAMATDDVGCENVQGGASLAQEKPLKGYCITATPSECKPNIHWLKSPEKTVQESAAVLR.

It belongs to the beta-herpesvirinae UL38 protein family. In terms of assembly, interacts with host MDM2; this interaction leads to the stabilization of host TP53.

It localises to the host cytoplasm. The protein resides in the host nucleus. In terms of biological role, plays a role in the inhibition of host apoptosis to facilitate efficient viral replication. Promotes stabilization and inactivation of host TP53 through interaction with host MDM2. The sequence is that of Apoptosis inhibitor U19 (U19) from Human herpesvirus 6A (strain Uganda-1102) (HHV-6 variant A).